Consider the following 424-residue polypeptide: CinA-like protein (424 aa).

The protein belongs to the CinA family.

In Shewanella pealeana (strain ATCC 700345 / ANG-SQ1), this protein is CinA-like protein.